Consider the following 443-residue polypeptide: 23S rRNA (uracil(1939)-C(5))-methyltransferase RlmD (443 aa).

The 59-residue stretch at 12–70 folds into the TRAM domain; it reads AKKLSQKIALKVQRLDHLGAGIAEHQGKVVFIPGALPGETVEVQLTEQKKNYARAKLQR. C83, C89, C92, and C171 together coordinate [4Fe-4S] cluster. Residues Q276, F305, N310, E326, D353, and D373 each coordinate S-adenosyl-L-methionine. C399 functions as the Nucleophile in the catalytic mechanism.

This sequence belongs to the class I-like SAM-binding methyltransferase superfamily. RNA M5U methyltransferase family. RlmD subfamily.

The enzyme catalyses uridine(1939) in 23S rRNA + S-adenosyl-L-methionine = 5-methyluridine(1939) in 23S rRNA + S-adenosyl-L-homocysteine + H(+). Catalyzes the formation of 5-methyl-uridine at position 1939 (m5U1939) in 23S rRNA. In Shewanella amazonensis (strain ATCC BAA-1098 / SB2B), this protein is 23S rRNA (uracil(1939)-C(5))-methyltransferase RlmD.